A 749-amino-acid chain; its full sequence is Myosin-binding protein 2 (749 aa).

Residues 17-37 (ITLILVYAFLEWSLIFFILLN) traverse the membrane as a helical segment. Residues 164–184 (NLNDSQEETEEKKVPQSHEKL) are disordered. The segment covering 173 to 184 (EEKKVPQSHEKL) has biased composition (basic and acidic residues). The region spanning 411–509 (LTVDKLKFEL…ELEKELEVYR (99 aa)) is the GTD-binding domain. Residues 589-621 (ERLSILGRLKFLEEKLTDLNNEEDDEEEAKTFE) adopt a coiled-coil conformation. Positions 608-640 (NNEEDDEEEAKTFESNGSINGNEHIHGKETNGK) are disordered. A compositionally biased stretch (basic and acidic residues) spans 630-639 (EHIHGKETNG). Residues 676–710 (DSEKGENVTIEEEVDELYERLEALEADREFLRHCV) are a coiled coil.

In terms of assembly, interacts with myosin XI-K and XI-1. In terms of tissue distribution, expressed in leaf epidermal cells, roots and root hairs.

It is found in the endomembrane system. Its function is as follows. Membrane-anchored myosin receptors that define a distinct, plant-specific transport vesicle compartment. This Arabidopsis thaliana (Mouse-ear cress) protein is Myosin-binding protein 2.